An 83-amino-acid polypeptide reads, in one-letter code: Putative defensin-like protein 67 (83 aa).

A signal peptide spans 1–24 (MGSSKLMVTCIVVAMLTISCDILS). 4 disulfides stabilise this stretch: Cys-38-Cys-82, Cys-42-Cys-65, Cys-51-Cys-80, and Cys-55-Cys-81.

It belongs to the DEFL family.

It localises to the secreted. The chain is Putative defensin-like protein 67 from Arabidopsis thaliana (Mouse-ear cress).